The following is a 264-amino-acid chain: Flagellar brake protein YcgR 1 (264 aa).

A PilZ domain is found at 132–249 (QRREFFRLES…RLAMIERYIA (118 aa)).

The protein belongs to the YcgR family. As to quaternary structure, monomer. Interacts with the flagellar basal bodies.

It is found in the bacterial flagellum basal body. Acts as a flagellar brake, regulating swimming and swarming in a bis-(3'-5') cyclic diguanylic acid (c-di-GMP)-dependent manner. Binds 1 c-di-GMP dimer per subunit. Increasing levels of c-di-GMP lead to decreased motility. This Dechloromonas aromatica (strain RCB) protein is Flagellar brake protein YcgR 1.